The primary structure comprises 169 residues: NAD(P)H-quinone oxidoreductase subunit 6, chloroplastic (169 aa).

The next 5 membrane-spanning stretches (helical) occupy residues 7–27, 29–49, 58–78, 90–110, and 139–159; these read FSSA…IFLP, IVYA…IYVL, AQVL…IMLV, SPPL…VQMI, and LLAF…AIVL.

This sequence belongs to the complex I subunit 6 family. NDH is composed of at least 16 different subunits, 5 of which are encoded in the nucleus.

The protein resides in the plastid. The protein localises to the chloroplast thylakoid membrane. It carries out the reaction a plastoquinone + NADH + (n+1) H(+)(in) = a plastoquinol + NAD(+) + n H(+)(out). It catalyses the reaction a plastoquinone + NADPH + (n+1) H(+)(in) = a plastoquinol + NADP(+) + n H(+)(out). NDH shuttles electrons from NAD(P)H:plastoquinone, via FMN and iron-sulfur (Fe-S) centers, to quinones in the photosynthetic chain and possibly in a chloroplast respiratory chain. The immediate electron acceptor for the enzyme in this species is believed to be plastoquinone. Couples the redox reaction to proton translocation, and thus conserves the redox energy in a proton gradient. In Nephroselmis olivacea (Green alga), this protein is NAD(P)H-quinone oxidoreductase subunit 6, chloroplastic (ndhG).